A 236-amino-acid polypeptide reads, in one-letter code: Urease accessory protein UreF (236 aa).

Belongs to the UreF family. UreD, UreF and UreG form a complex that acts as a GTP-hydrolysis-dependent molecular chaperone, activating the urease apoprotein by helping to assemble the nickel containing metallocenter of UreC. The UreE protein probably delivers the nickel.

It is found in the cytoplasm. Functionally, required for maturation of urease via the functional incorporation of the urease nickel metallocenter. This is Urease accessory protein UreF from Synechocystis sp. (strain ATCC 27184 / PCC 6803 / Kazusa).